The primary structure comprises 604 residues: ATPase family AAA domain-containing protein 3A homolog (604 aa).

The interval 1–50 (MSWLLGRNRQQPQPDQTAGFSEGGGAADPEGRTAGEKSGDSQLSRAERKA) is disordered. The segment covering 8 to 19 (NRQQPQPDQTAG) has biased composition (polar residues). The segment covering 29–50 (PEGRTAGEKSGDSQLSRAERKA) has biased composition (basic and acidic residues). Residues 62-221 (ERAADAAKTL…INLEKIRLKA (160 aa)) adopt a coiled-coil conformation. Residue 358-365 (GPPGTGKT) participates in ATP binding.

In terms of assembly, can form homooligomers.

Its subcellular location is the mitochondrion inner membrane. The protein resides in the mitochondrion matrix. It is found in the mitochondrion nucleoid. In terms of biological role, required to maintain the proper number of mitochondria in neurons and muscles. The protein is ATPase family AAA domain-containing protein 3A homolog of Drosophila melanogaster (Fruit fly).